The chain runs to 201 residues: Potassium-transporting ATPase KdpC subunit (201 aa).

The chain crosses the membrane as a helical span at residues L12–L34. A disordered region spans residues R69 to T102. A compositionally biased stretch (polar residues) spans S81–P101.

The protein belongs to the KdpC family. As to quaternary structure, the system is composed of three essential subunits: KdpA, KdpB and KdpC.

Its subcellular location is the cell inner membrane. Functionally, part of the high-affinity ATP-driven potassium transport (or Kdp) system, which catalyzes the hydrolysis of ATP coupled with the electrogenic transport of potassium into the cytoplasm. This subunit acts as a catalytic chaperone that increases the ATP-binding affinity of the ATP-hydrolyzing subunit KdpB by the formation of a transient KdpB/KdpC/ATP ternary complex. The polypeptide is Potassium-transporting ATPase KdpC subunit (Rhodopseudomonas palustris (strain TIE-1)).